A 330-amino-acid chain; its full sequence is Small ribosomal subunit protein uS15m (330 aa).

Belongs to the universal ribosomal protein uS15 family. As to quaternary structure, component of the mitochondrial ribosome small subunit (28S) which comprises a 12S rRNA and about 30 distinct proteins.

It localises to the mitochondrion. The protein is Small ribosomal subunit protein uS15m (mrps-15) of Caenorhabditis elegans.